The following is a 1466-amino-acid chain: MSDESASGSDPDLDPDVELEDEEEEEEEEEVAVEEHDRDDEEGLLDDTSLEGMCGTEHAQLGEDGQRPPRCTSTTSSQSEPSEQLRHQGKILASEDPKKKRAQKPSHMRRNIRKLLREDQLEPVTKAAQQEELERRKRLEQQRKEYAAPIPTVPLEFLPEEIVLRASDGPQLPPRVLAQEVICLDSSSGSEDEKSSRDEVIELSSGEEDTLHIVDSSESVSEEDEEEEKGGTHVNDALNQHDALGRVLVNLNHPPEEENVFLAPQLARAVKPHQIGGIRFLYDNLVESLERFKTSSGFGCILAHSMGLGKTLQVISFIDVLFRHTPAKTVLAIVPVNTLQNWLAEFNMWLPAPEALPADSKPEEVQPRFFKVHILNDEHKTVASRAKVTADWVSEGGVLLMGYEMYRLLTLKKSLATSRPKKTKKRSHPVIIDLDEEDRQQEFRREFEKALCRPGPDVVICDEGHRIKNCQASTSQALKNIRSRRRVVLTGYPLQNNLIEYWCMVDFVRPDFLGTRQEFSNMFERPILNGQCIDSTPQDVRLMRYRSHVLHSLLEGFVQRRGHTVLKIHLPAKEENVILVRLSQIQRDLYTQFMDRFRDCGTSGWLGLNPLKAFCVCCKIWNHPDVLYEALQKENLANEQDLDVEELGSAGTSARCPPHGTKVKGEDSALPSSMGEATNSKFLQGVGFNPFQERGNNIVTYEWAKELLTNYQTGVLENSPKMVLLFHLIEESVKLGDKILVFSQSLSTLALIEEFLGKRDMPCLPGAEGQGTQKWVRNVSYFRLDGSTPAFERERLINQFNDPSNLTTWLFLLSTRAGCLGVNLIGANRVVVFDASWNPCHDAQAVCRVYRYGQKKPCHIYRLVADYTLEKKIYDRQISKQGMSDRVVDDLNPMLNFTRKEVENLLHFVEKEPAPQTSLDIKGIKESVLQLACLKYPHLITKEPFEHESLLLNRKDHKLTKAEKKAAKKSYEEDKRTSVPYTRPSYAQYYPASDQSLTSIPAFSQRNWQPTLKGDEKPVASVRPVQSTPIPMMPRHVPLSGGVSSASSTNTSMNFPINYLQRAGVLVQKVVTTTDIVIPGLNSSTDVQARINAGESIHIIRGTKGTYIRTSDGRIFAVRATGKPKAPEDGRMAASGSQGPSLASTSNGRHSASSPKAPDPEGLARPVSPDSPEIISELQQYADVAAARESRQSSPSISAALPGPPGQLMDNSTIPGTALGTEPCLGGHCLNSSLLVTGQPSGGRHPVLDLRGHKRKLATPSVTQESIRRRSRKGHLPAPVQPYEHGYPVSGGFAMPPVSLNHNLTTPFTSQAGENSLFMGSNPSYYQLSNLLADARLVFPVTTDPLVPAGPVSSSSTATSVTASNPSFMLNPSVPGMLPSYSLPFSQPLLSEPRMFAPFPSPGLPSNLSRGVSVYPGYMSPHAGYPAGGLLRSQVPPFDSHEVAEVGFSSNDDEDKDDDVIEVTGK.

Disordered stretches follow at residues 1 to 137 (MSDE…ERRK) and 185 to 235 (DSSS…THVN). Residues 11–49 (PDLDPDVELEDEEEEEEEEEVAVEEHDRDDEEGLLDDTS) show a composition bias toward acidic residues. Over residues 72–82 (TSTTSSQSEPS) the composition is skewed to low complexity. A compositionally biased stretch (basic residues) spans 99–114 (KKRAQKPSHMRRNIRK). Glycyl lysine isopeptide (Lys-Gly) (interchain with G-Cter in SUMO2) cross-links involve residues Lys114 and Lys126. Over residues 191-200 (EDEKSSRDEV) the composition is skewed to basic and acidic residues. Residue Lys271 forms a Glycyl lysine isopeptide (Lys-Gly) (interchain with G-Cter in SUMO2) linkage. The 221-residue stretch at 291–511 (RFKTSSGFGC…WCMVDFVRPD (221 aa)) folds into the Helicase ATP-binding domain. ATP is bound at residue 304–311 (HSMGLGKT). The DEAH box signature appears at 462–465 (DEGH). Positions 550–554 (LHSLL) match the LXXLL motif 1 motif. Residues 649–670 (SAGTSARCPPHGTKVKGEDSAL) form a disordered region. Glycyl lysine isopeptide (Lys-Gly) (interchain with G-Cter in SUMO2) cross-links involve residues Lys664, Lys681, Lys758, Lys900, Lys1013, and Lys1017. The Helicase C-terminal domain maps to 727-895 (HLIEESVKLG…RVVDDLNPML (169 aa)). 2 disordered regions span residues 1026-1045 (QSTP…GVSS) and 1120-1170 (ATGK…VSPD). A compositionally biased stretch (polar residues) spans 1135–1154 (SGSQGPSLASTSNGRHSASS). Ser1168 and Ser1171 each carry phosphoserine. 2 disordered regions span residues 1184–1212 (VAAA…MDNS) and 1259–1281 (TPSV…APVQ). Thr1259 is subject to Phosphothreonine. An LXXLL motif 2 motif is present at residues 1328–1332 (LSNLL). The disordered stretch occupies residues 1444–1466 (AEVGFSSNDDEDKDDDVIEVTGK). Positions 1451–1466 (NDDEDKDDDVIEVTGK) are enriched in acidic residues.

The protein belongs to the SNF2/RAD54 helicase family. Interacts with AR via its N-terminus. Interacts with DYRK1A. Binds DNA and mononucleosomes, but does not seem to form large multiprotein complexes. Sumoylated. Expressed at relatively low level, with highest expression in testis, liver and kidney. In brain, it is expressed in hippocampal and cerebellar neurons. In testis, it is present at high level in Sertoli cell nuclei. Also present in Leydig cell (at protein level).

The protein localises to the nucleus. It catalyses the reaction ATP + H2O = ADP + phosphate + H(+). With respect to regulation, enzyme activity is enhanced by dsDNA (double-stranded DNA) and ssDNA (single-stranded DNA). In terms of biological role, DNA helicase that modulates androgen receptor (AR)-dependent transactivation in a promoter-dependent manner. Not able to remodel mononucleosomes in vitro. Acts as an AR-coregulator in Sertoli cells. In Mus musculus (Mouse), this protein is Helicase ARIP4 (Rad54l2).